Reading from the N-terminus, the 77-residue chain is Sec-independent protein translocase protein TatA (77 aa).

A helical membrane pass occupies residues 2–22 (GFGGISIWQLLIILLIVVMLF). 2 stretches are compositionally biased toward basic and acidic residues: residues 46-59 (DNGE…EEPK) and 66-77 (QARKVEEPAKKD). A disordered region spans residues 46 to 77 (DNGEAEKPAVEEPKGQTIDAQARKVEEPAKKD).

Belongs to the TatA/E family. As to quaternary structure, the Tat system comprises two distinct complexes: a TatABC complex, containing multiple copies of TatA, TatB and TatC subunits, and a separate TatA complex, containing only TatA subunits. Substrates initially bind to the TatABC complex, which probably triggers association of the separate TatA complex to form the active translocon.

It is found in the cell inner membrane. In terms of biological role, part of the twin-arginine translocation (Tat) system that transports large folded proteins containing a characteristic twin-arginine motif in their signal peptide across membranes. TatA could form the protein-conducting channel of the Tat system. The sequence is that of Sec-independent protein translocase protein TatA from Ectopseudomonas mendocina (strain ymp) (Pseudomonas mendocina).